A 305-amino-acid chain; its full sequence is Methionyl-tRNA formyltransferase (305 aa).

(6S)-5,6,7,8-tetrahydrofolate is bound at residue 111–114; it reads SLLP.

It belongs to the Fmt family.

The catalysed reaction is L-methionyl-tRNA(fMet) + (6R)-10-formyltetrahydrofolate = N-formyl-L-methionyl-tRNA(fMet) + (6S)-5,6,7,8-tetrahydrofolate + H(+). In terms of biological role, attaches a formyl group to the free amino group of methionyl-tRNA(fMet). The formyl group appears to play a dual role in the initiator identity of N-formylmethionyl-tRNA by promoting its recognition by IF2 and preventing the misappropriation of this tRNA by the elongation apparatus. The chain is Methionyl-tRNA formyltransferase from Campylobacter jejuni subsp. jejuni serotype O:2 (strain ATCC 700819 / NCTC 11168).